The sequence spans 105 residues: Integration host factor (105 aa).

An H2TH motif, binds DNA motif is present at residues 64 to 71 (LPKVGKVK). The segment at 82–94 (APTRRLRGLGDRQ) is lid, binds DNA.

The protein belongs to the actinobacterial IHF (aIHF) family. As to quaternary structure, binds DNA as a monomer. (Microbial infection) Forms a complex with L5 Int and attP DNA. The complex binds attB to form products.

The protein resides in the cytoplasm. It localises to the nucleoid. A nucleoid-associated protein (NAP) that binds DNA without any sequence specificity. Compacts DNA. Binds along the whole chromosome in a dynamic manner, has equal affinity for the oriC site, attB and a randon 62% GC-rich sequence. Plays a role in transcription regulation. Functionally, (Microbial infection) Stimulates temperate Mycobacterium phage L5 Int-mediated recombination in vitro using supercoiled attP (phage attachment site) DNA, linear attB DNA (bacterial attachment site) and L5 integrase (L5 Int or Int-L5, AC P22884). mIHF acts on L5 Int to stimulate formation of a specific intasome complex. mIHF probably stabilizes a sharp bend in the DNA during phage integration. This is Integration host factor from Mycolicibacterium smegmatis (strain ATCC 700084 / mc(2)155) (Mycobacterium smegmatis).